The primary structure comprises 509 residues: BPI fold-containing family C protein (509 aa).

The N-terminal stretch at 1-23 (MRTKQVPVLWACFLLWSLYIASS) is a signal peptide. Residues Asn63, Asn79, Asn92, Asn113, and Asn117 are each glycosylated (N-linked (GlcNAc...) asparagine). Residues Cys161 and Cys202 are joined by a disulfide bond. 5 N-linked (GlcNAc...) asparagine glycosylation sites follow: Asn215, Asn227, Asn357, Asn374, and Asn457.

This sequence belongs to the BPI/LBP/Plunc superfamily. BPI/LBP family.

Its subcellular location is the secreted. The protein is BPI fold-containing family C protein (Bpifc) of Mus musculus (Mouse).